The sequence spans 312 residues: 4-hydroxy-3-methylbut-2-enyl diphosphate reductase (312 aa).

Cysteine 14 is a [4Fe-4S] cluster binding site. The (2E)-4-hydroxy-3-methylbut-2-enyl diphosphate site is built by histidine 43 and histidine 76. Dimethylallyl diphosphate-binding residues include histidine 43 and histidine 76. Isopentenyl diphosphate contacts are provided by histidine 43 and histidine 76. Residue cysteine 98 participates in [4Fe-4S] cluster binding. Histidine 125 lines the (2E)-4-hydroxy-3-methylbut-2-enyl diphosphate pocket. Histidine 125 provides a ligand contact to dimethylallyl diphosphate. Isopentenyl diphosphate is bound at residue histidine 125. Glutamate 127 (proton donor) is an active-site residue. Threonine 165 is a (2E)-4-hydroxy-3-methylbut-2-enyl diphosphate binding site. Cysteine 195 lines the [4Fe-4S] cluster pocket. (2E)-4-hydroxy-3-methylbut-2-enyl diphosphate-binding residues include serine 223, serine 224, asparagine 225, and serine 269. Residues serine 223, serine 224, asparagine 225, and serine 269 each contribute to the dimethylallyl diphosphate site. Serine 223, serine 224, asparagine 225, and serine 269 together coordinate isopentenyl diphosphate.

This sequence belongs to the IspH family. Requires [4Fe-4S] cluster as cofactor.

It catalyses the reaction isopentenyl diphosphate + 2 oxidized [2Fe-2S]-[ferredoxin] + H2O = (2E)-4-hydroxy-3-methylbut-2-enyl diphosphate + 2 reduced [2Fe-2S]-[ferredoxin] + 2 H(+). It carries out the reaction dimethylallyl diphosphate + 2 oxidized [2Fe-2S]-[ferredoxin] + H2O = (2E)-4-hydroxy-3-methylbut-2-enyl diphosphate + 2 reduced [2Fe-2S]-[ferredoxin] + 2 H(+). It participates in isoprenoid biosynthesis; dimethylallyl diphosphate biosynthesis; dimethylallyl diphosphate from (2E)-4-hydroxy-3-methylbutenyl diphosphate: step 1/1. The protein operates within isoprenoid biosynthesis; isopentenyl diphosphate biosynthesis via DXP pathway; isopentenyl diphosphate from 1-deoxy-D-xylulose 5-phosphate: step 6/6. Catalyzes the conversion of 1-hydroxy-2-methyl-2-(E)-butenyl 4-diphosphate (HMBPP) into a mixture of isopentenyl diphosphate (IPP) and dimethylallyl diphosphate (DMAPP). Acts in the terminal step of the DOXP/MEP pathway for isoprenoid precursor biosynthesis. The chain is 4-hydroxy-3-methylbut-2-enyl diphosphate reductase from Leptospira interrogans serogroup Icterohaemorrhagiae serovar copenhageni (strain Fiocruz L1-130).